A 108-amino-acid chain; its full sequence is PTS system fructose-like EIIB component 1 (108 aa).

The region spanning 1-101 is the PTS EIIB type-2 domain; that stretch reads MSKKLIALCA…AAGIIKEIEE (101 aa). The Phosphocysteine intermediate role is filled by Cys11. Position 11 is a phosphocysteine; by EIIA (Cys11).

It localises to the cytoplasm. The enzyme catalyses D-fructose(out) + N(pros)-phospho-L-histidyl-[protein] = D-fructose 1-phosphate(in) + L-histidyl-[protein]. Functionally, the phosphoenolpyruvate-dependent sugar phosphotransferase system (sugar PTS), a major carbohydrate active transport system, catalyzes the phosphorylation of incoming sugar substrates concomitantly with their translocation across the cell membrane. The enzyme II FryABC PTS system is involved in fructose transport. In Shigella flexneri, this protein is PTS system fructose-like EIIB component 1 (fryB).